Here is a 403-residue protein sequence, read N- to C-terminus: Ribosomal RNA large subunit methyltransferase I (403 aa).

One can recognise a PUA domain in the interval 9-88 (YPRLVLSKGR…ESIDIAFFTR (80 aa)).

It belongs to the methyltransferase superfamily. RlmI family.

It localises to the cytoplasm. The catalysed reaction is cytidine(1962) in 23S rRNA + S-adenosyl-L-methionine = 5-methylcytidine(1962) in 23S rRNA + S-adenosyl-L-homocysteine + H(+). Its function is as follows. Specifically methylates the cytosine at position 1962 (m5C1962) of 23S rRNA. The sequence is that of Ribosomal RNA large subunit methyltransferase I from Salmonella agona (strain SL483).